Here is a 448-residue protein sequence, read N- to C-terminus: Glutamyl-tRNA reductase (448 aa).

Substrate contacts are provided by residues threonine 49 to arginine 52, serine 109, glutamate 114 to glutamine 116, and glutamine 120. Cysteine 50 serves as the catalytic Nucleophile. Glycine 189–serine 194 is an NADP(+) binding site.

The protein belongs to the glutamyl-tRNA reductase family. As to quaternary structure, homodimer.

The catalysed reaction is (S)-4-amino-5-oxopentanoate + tRNA(Glu) + NADP(+) = L-glutamyl-tRNA(Glu) + NADPH + H(+). It functions in the pathway porphyrin-containing compound metabolism; protoporphyrin-IX biosynthesis; 5-aminolevulinate from L-glutamyl-tRNA(Glu): step 1/2. Functionally, catalyzes the NADPH-dependent reduction of glutamyl-tRNA(Glu) to glutamate 1-semialdehyde (GSA). The sequence is that of Glutamyl-tRNA reductase from Staphylococcus aureus (strain MRSA252).